The primary structure comprises 250 residues: Agamous-like MADS-box protein AGL9 homolog (250 aa).

Positions 3–57 (RGRVELKMIENKINRQVTFAKRRKRLLKKAYELSVLCDAEVALIIFSNRGKLYEF) constitute an MADS-box domain. The K-box domain occupies 87–177 (TQSSQQEYLK…KRRFEESSQA (91 aa)).

In terms of tissue distribution, expressed in petals and weakly in sepals but not in the column (gynostemium).

It is found in the nucleus. Functionally, probable transcription factor active in inflorescence development and floral organogenesis. This chain is Agamous-like MADS-box protein AGL9 homolog, found in Aranda deborah (Orchid).